Here is a 112-residue protein sequence, read N- to C-terminus: DNA-binding protein PF1087 (112 aa).

It belongs to the PDCD5 family.

The polypeptide is DNA-binding protein PF1087 (Pyrococcus furiosus (strain ATCC 43587 / DSM 3638 / JCM 8422 / Vc1)).